The chain runs to 447 residues: Serine/threonine-protein phosphatase 2A 55 kDa regulatory subunit B gamma isoform (447 aa).

WD repeat units lie at residues 22–61, 87–128, 171–209, 220–260, 279–317, 334–375, and 410–446; these read TEADVISTVEFNHTGELLATGDKGGRVVIFQREPESKNAP, EIEE…KRPE, GHTYHINSISVNSDCETYMSADDLRINLWHLAITDRSFN, DLTE…LCDK, EIISSVSDVKFSHSGRYMLTRDYLTVKVWDLNMEARPIE, ESDC…DVTL, and DFTKKILHTAWHPAENIIAIAATNNLYIFQDKVNSDM.

Belongs to the phosphatase 2A regulatory subunit B family. As to quaternary structure, PP2A consists of a common heterodimeric core enzyme, composed of a 36 kDa catalytic subunit (subunit C) and a 65 kDa constant regulatory subunit (PR65 or subunit A), that associates with a variety of regulatory subunits. Proteins that associate with the core dimer include three families of regulatory subunits B (the R2/B/PR55/B55, R3/B''/PR72/PR130/PR59 and R5/B'/B56 families), the 48 kDa variable regulatory subunit, viral proteins, and cell signaling molecules. Interacts with IER5. Highly expressed in brain.

Its function is as follows. The B regulatory subunit might modulate substrate selectivity and catalytic activity, and might also direct the localization of the catalytic enzyme to a particular subcellular compartment. The protein is Serine/threonine-protein phosphatase 2A 55 kDa regulatory subunit B gamma isoform (Ppp2r2c) of Rattus norvegicus (Rat).